A 261-amino-acid polypeptide reads, in one-letter code: Fructoselysine 6-kinase (261 aa).

This sequence belongs to the carbohydrate kinase PfkB family. Monomer.

It carries out the reaction N(6)-(D-fructosyl)-L-lysine + ATP = N(6)-(6-phospho-D-fructosyl)-L-lysine + ADP + H(+). It participates in carbohydrate metabolism; fructoselysine degradation; D-glucose 6-phosphate and lysine from fructoselysine: step 1/2. Functionally, catalyzes the ATP-dependent phosphorylation of fructoselysine to fructoselysine 6-phosphate. May function in a fructoselysine degradation pathway that allows S.flexneri to grow on fructoselysine or psicoselysine. The protein is Fructoselysine 6-kinase (frlD) of Shigella flexneri.